A 680-amino-acid chain; its full sequence is MMVESASETIRSAPSGQNGVGSLSGQADGSSGGATGTTASGTGREVTTGADSNGEMSPAELLHFQQQQALQVARQFLLQQASGLSSPGNNDSKQSASAVQVPVSVAMMSPQMLTPQQMQQILSPPQLQALLQQQQALMLQQLQEYYKKQQEQLHLQLLTQQQAGKPQPKEALGNKQLAFQQQLLQMQQLQQQHLLNLQRQGLVSLQPNQASGPLQTLPQAAVCPTDLPQLWKGEGAPGQPAEDSVKQEGLDLTGTAATATSFAAPPKVSPPLSHHTLPNGQPTVLTSRRDSSSHEETPGSHPLYGHGECKWPGCETLCEDLGQFIKHLNTEHALDDRSTAQCRVQMQVVQQLEIQLAKESERLQAMMAHLHMRPSEPKPFSQPLNPVPGSSSFSKVTVSAADSFPDGLVHPPTSAAAPVTPLRPPGLGSASLHGGGPARRRSSDKFCSPISSELAQNHEFYKNADVRPPFTYASLIRQAILETPDRQLTLNEIYNWFTRMFAYFRRNTATWKNAVRHNLSLHKCFVRVENVKGAVWTVDEREYQKRRPPKMTGSPTLVKNMISGLSYGALNASYQAALAESSFPLLNSPGMLNPGSASSLLPLSHDDVGAPVEPLPSNGSSSPPRLSPPQYSHQVQVKEEPAEAEEDRQPGPPLGAPNPSASGPPEDRDLEEELPGEELS.

Positions 1-17 (MMVESASETIRSAPSGQ) are enriched in polar residues. The tract at residues 1–56 (MMVESASETIRSAPSGQNGVGSLSGQADGSSGGATGTTASGTGREVTTGADSNGEM) is disordered. Phosphoserine is present on residues Ser52 and Ser86. Glycyl lysine isopeptide (Lys-Gly) (interchain with G-Cter in SUMO2) cross-links involve residues Lys175 and Lys246. Residues 262-306 (FAAPPKVSPPLSHHTLPNGQPTVLTSRRDSSSHEETPGSHPLYGH) are disordered. Polar residues predominate over residues 276–286 (TLPNGQPTVLT). Positions 287–298 (SRRDSSSHEETP) are enriched in basic and acidic residues. The segment at 307–332 (GECKWPGCETLCEDLGQFIKHLNTEH) adopts a C2H2-type zinc-finger fold. The segment at 349–370 (VQQLEIQLAKESERLQAMMAHL) is leucine-zipper. A Glycyl lysine isopeptide (Lys-Gly) (interchain with G-Cter in SUMO2) cross-link involves residue Lys378. The disordered stretch occupies residues 407–445 (GLVHPPTSAAAPVTPLRPPGLGSASLHGGGPARRRSSDK). The fork-head DNA-binding region spans 467–559 (RPPFTYASLI…KMTGSPTLVK (93 aa)). Ser554 is subject to Phosphoserine. The tract at residues 602–680 (PLSHDDVGAP…EEELPGEELS (79 aa)) is disordered. Positions 617–635 (SNGSSSPPRLSPPQYSHQV) are enriched in polar residues. Acidic residues predominate over residues 668 to 680 (RDLEEELPGEELS).

As to quaternary structure, forms homodimers and heterodimers with FOXP1 and FOXP2. Dimerization is required for DNA-binding.

It localises to the nucleus. Its function is as follows. Transcriptional repressor that represses lung-specific expression. This is Forkhead box protein P4 (FOXP4) from Homo sapiens (Human).